Here is a 153-residue protein sequence, read N- to C-terminus: Peptidyl-prolyl cis-trans isomerase FKBP15-1 (153 aa).

The N-terminal stretch at methionine 1–alanine 25 is a signal peptide. The 89-residue stretch at glycine 52–asparagine 140 folds into the PPIase FKBP-type domain. The Prevents secretion from ER signature appears at lysine 150–leucine 153.

It belongs to the FKBP-type PPIase family.

The protein resides in the endoplasmic reticulum lumen. The enzyme catalyses [protein]-peptidylproline (omega=180) = [protein]-peptidylproline (omega=0). Its function is as follows. PPIases accelerate the folding of proteins. It catalyzes the cis-trans isomerization of proline imidic peptide bonds in oligopeptides. The polypeptide is Peptidyl-prolyl cis-trans isomerase FKBP15-1 (FKBP15-1) (Arabidopsis thaliana (Mouse-ear cress)).